A 58-amino-acid polypeptide reads, in one-letter code: uncharacterized protein (58 aa).

The span at 23 to 51 (TTTSTSTTTTSTTTSTTTSTTTTTTTTTT) shows a compositional bias: low complexity. A disordered region spans residues 23–58 (TTTSTSTTTTSTTTSTTTSTTTTTTTTTTKDFNTET).

This is an uncharacterized protein from Dictyostelium discoideum (Social amoeba).